The chain runs to 398 residues: DnaJ-like protein R260 (398 aa).

One can recognise a J domain in the interval 7–72; it reads DLYEILGLTP…EKRRVYDQYG (66 aa). The CR-type zinc finger occupies 118 to 202; it reads KKTVKVTITV…CKGAGINKSE (85 aa). 4 CXXCXGXG motif repeats span residues 131–138, 147–154, 173–180, and 190–197; these read CDDCDATG, CKVCRGKG, CHGCQGKK, and CPSCKGAG. The disordered stretch occupies residues 364–398; sequence LRQINTDPSDESQDRDSEESYGGHGRPEGVGCAQQ. Residues 371-382 are compositionally biased toward acidic residues; that stretch reads PSDESQDRDSEE.

Zn(2+) serves as cofactor.

This is DnaJ-like protein R260 from Acanthamoeba polyphaga mimivirus (APMV).